A 587-amino-acid polypeptide reads, in one-letter code: Protein cereblon (587 aa).

Disordered stretches follow at residues 1–56, 78–113, and 157–195; these read MDEE…PAEY, DVLQ…GLPN, and FSQE…IDIG. Composition is skewed to polar residues over residues 22-31 and 86-96; these read EDQSQSQGLQ and SEGSHPSSDMS. Over residues 159-168 the composition is skewed to basic and acidic residues; sequence QERRRSRTSE. The segment covering 170 to 181 has biased composition (acidic residues); the sequence is TSQEEAAEEPDD. Over residues 182-191 the composition is skewed to pro residues; the sequence is PPPQQPPLPP. Residues 227–453 enclose the Lon N-terminal domain; that stretch reads HMLIFLHHHI…LIKSTFKDET (227 aa). The 110-residue stretch at 452–561 folds into the CULT domain; sequence ETLFFCRYCN…LSGSSVRIGK (110 aa). Residues C457, C460, C526, and C529 each coordinate Zn(2+).

It belongs to the CRBN family. Likely a component of a DCX (DDB1-CUL4-X-box) protein ligase complex. May interact with pic/DDB1. Ubiquitinated.

It is found in the nucleus. It functions in the pathway protein modification; protein ubiquitination. Its function is as follows. Substrate recognition component of a DCX (DDB1-CUL4-X-box) E3 protein ligase complex that mediates the ubiquitination and subsequent proteasomal degradation of target proteins. Has an essential role in mediating growth by negatively regulating insulin signaling. It also has a role in maintaining presynaptic function in the neuromuscular junction synapses of third-instar larvae. This Drosophila simulans (Fruit fly) protein is Protein cereblon.